The primary structure comprises 452 residues: Pup--protein ligase (452 aa).

E9 provides a ligand contact to Mg(2+). R53 contributes to the ATP binding site. Y55 provides a ligand contact to Mg(2+). D57 functions as the Proton acceptor in the catalytic mechanism. Residue E63 coordinates Mg(2+). ATP-binding residues include T66 and W419.

This sequence belongs to the Pup ligase/Pup deamidase family. Pup-conjugating enzyme subfamily.

It carries out the reaction ATP + [prokaryotic ubiquitin-like protein]-L-glutamate + [protein]-L-lysine = ADP + phosphate + N(6)-([prokaryotic ubiquitin-like protein]-gamma-L-glutamyl)-[protein]-L-lysine.. It functions in the pathway protein degradation; proteasomal Pup-dependent pathway. The protein operates within protein modification; protein pupylation. In terms of biological role, catalyzes the covalent attachment of the prokaryotic ubiquitin-like protein modifier Pup to the proteasomal substrate proteins, thereby targeting them for proteasomal degradation. This tagging system is termed pupylation. The ligation reaction involves the side-chain carboxylate of the C-terminal glutamate of Pup and the side-chain amino group of a substrate lysine. This chain is Pup--protein ligase, found in Mycobacterium leprae (strain Br4923).